The primary structure comprises 672 residues: UvrABC system protein B (672 aa).

Residues 26–181 (AGLEDGLAYQ…ILQRLAELQY (156 aa)) enclose the Helicase ATP-binding domain. 39-46 (GVTGSGKT) contributes to the ATP binding site. The Beta-hairpin signature appears at 92-115 (YYDYYQPEAYVPSSDTYIEKDASI). The Helicase C-terminal domain occupies 430-592 (QVDDLLSEIK…ITPKSIQKAV (163 aa)). One can recognise a UVR domain in the interval 631-666 (AKELRKLEEQMYHHARNLEFEEAAAVRDKIQHIRKG).

Belongs to the UvrB family. As to quaternary structure, forms a heterotetramer with UvrA during the search for lesions. Interacts with UvrC in an incision complex.

It localises to the cytoplasm. Functionally, the UvrABC repair system catalyzes the recognition and processing of DNA lesions. A damage recognition complex composed of 2 UvrA and 2 UvrB subunits scans DNA for abnormalities. Upon binding of the UvrA(2)B(2) complex to a putative damaged site, the DNA wraps around one UvrB monomer. DNA wrap is dependent on ATP binding by UvrB and probably causes local melting of the DNA helix, facilitating insertion of UvrB beta-hairpin between the DNA strands. Then UvrB probes one DNA strand for the presence of a lesion. If a lesion is found the UvrA subunits dissociate and the UvrB-DNA preincision complex is formed. This complex is subsequently bound by UvrC and the second UvrB is released. If no lesion is found, the DNA wraps around the other UvrB subunit that will check the other stand for damage. This Coxiella burnetii (strain CbuK_Q154) (Coxiella burnetii (strain Q154)) protein is UvrABC system protein B.